The primary structure comprises 394 residues: 1-deoxy-D-xylulose 5-phosphate reductoisomerase (394 aa).

Residues Thr10, Gly11, Ser12, Ile13, Gly38, Arg39, Asn40, and Asn123 each contribute to the NADPH site. Lys124 contacts 1-deoxy-D-xylulose 5-phosphate. Residue Glu125 participates in NADPH binding. Asp149 is a binding site for Mn(2+). Residues Ser150, Glu151, Ser175, and His198 each contribute to the 1-deoxy-D-xylulose 5-phosphate site. Glu151 contributes to the Mn(2+) binding site. Residue Gly204 participates in NADPH binding. 1-deoxy-D-xylulose 5-phosphate-binding residues include Ser211, Asn216, Lys217, and Glu220. Position 220 (Glu220) interacts with Mn(2+).

This sequence belongs to the DXR family. The cofactor is Mg(2+). Requires Mn(2+) as cofactor.

The enzyme catalyses 2-C-methyl-D-erythritol 4-phosphate + NADP(+) = 1-deoxy-D-xylulose 5-phosphate + NADPH + H(+). Its pathway is isoprenoid biosynthesis; isopentenyl diphosphate biosynthesis via DXP pathway; isopentenyl diphosphate from 1-deoxy-D-xylulose 5-phosphate: step 1/6. Catalyzes the NADPH-dependent rearrangement and reduction of 1-deoxy-D-xylulose-5-phosphate (DXP) to 2-C-methyl-D-erythritol 4-phosphate (MEP). The sequence is that of 1-deoxy-D-xylulose 5-phosphate reductoisomerase from Cereibacter sphaeroides (strain KD131 / KCTC 12085) (Rhodobacter sphaeroides).